A 138-amino-acid chain; its full sequence is Putative pre-16S rRNA nuclease (138 aa).

This sequence belongs to the YqgF nuclease family.

The protein resides in the cytoplasm. In terms of biological role, could be a nuclease involved in processing of the 5'-end of pre-16S rRNA. In Helicobacter hepaticus (strain ATCC 51449 / 3B1), this protein is Putative pre-16S rRNA nuclease.